We begin with the raw amino-acid sequence, 194 residues long: Peptidyl-tRNA hydrolase (194 aa).

Y17 contacts tRNA. H22 (proton acceptor) is an active-site residue. Residues F68, N70, and N116 each coordinate tRNA.

The protein belongs to the PTH family. As to quaternary structure, monomer.

It localises to the cytoplasm. The enzyme catalyses an N-acyl-L-alpha-aminoacyl-tRNA + H2O = an N-acyl-L-amino acid + a tRNA + H(+). Its function is as follows. Hydrolyzes ribosome-free peptidyl-tRNAs (with 1 or more amino acids incorporated), which drop off the ribosome during protein synthesis, or as a result of ribosome stalling. Catalyzes the release of premature peptidyl moieties from peptidyl-tRNA molecules trapped in stalled 50S ribosomal subunits, and thus maintains levels of free tRNAs and 50S ribosomes. The polypeptide is Peptidyl-tRNA hydrolase (Actinobacillus pleuropneumoniae serotype 5b (strain L20)).